An 814-amino-acid chain; its full sequence is Putative E3 ubiquitin-protein ligase RF298 (814 aa).

Disordered regions lie at residues 1 to 51 (MVEK…ASLT), 221 to 301 (SVSN…TKSA), and 411 to 441 (ALPA…STKP). The span at 221 to 231 (SVSNASKSSES) shows a compositional bias: low complexity. The span at 289 to 301 (SVSTASGEGTKSA) shows a compositional bias: polar residues. Residues 423–435 (SEKKSGSEPEEKP) are compositionally biased toward basic and acidic residues. Positions 506–710 (ELKALRKEKE…KLKSDSLKIA (205 aa)) form a coiled coil. An RING-type zinc finger spans residues 760-800 (CVMCLSEEMSVIFLPCAHQVLCSKCNQLHEKEAMEDCPSCR).

The protein belongs to the RING-type zinc finger family.

The enzyme catalyses S-ubiquitinyl-[E2 ubiquitin-conjugating enzyme]-L-cysteine + [acceptor protein]-L-lysine = [E2 ubiquitin-conjugating enzyme]-L-cysteine + N(6)-ubiquitinyl-[acceptor protein]-L-lysine.. Its pathway is protein modification; protein ubiquitination. This chain is Putative E3 ubiquitin-protein ligase RF298 (RF298), found in Arabidopsis thaliana (Mouse-ear cress).